A 503-amino-acid chain; its full sequence is Lysine--tRNA ligase (503 aa).

Positions 414 and 421 each coordinate Mg(2+).

It belongs to the class-II aminoacyl-tRNA synthetase family. In terms of assembly, homodimer. The cofactor is Mg(2+).

The protein localises to the cytoplasm. The enzyme catalyses tRNA(Lys) + L-lysine + ATP = L-lysyl-tRNA(Lys) + AMP + diphosphate. The sequence is that of Lysine--tRNA ligase from Neisseria gonorrhoeae (strain NCCP11945).